The following is a 163-amino-acid chain: Nucleotide-binding protein YajQ (163 aa).

Belongs to the YajQ family.

Functionally, nucleotide-binding protein. The polypeptide is Nucleotide-binding protein YajQ (Escherichia coli O127:H6 (strain E2348/69 / EPEC)).